The sequence spans 185 residues: Ribosome-recycling factor (185 aa).

The protein belongs to the RRF family.

It is found in the cytoplasm. Functionally, responsible for the release of ribosomes from messenger RNA at the termination of protein biosynthesis. May increase the efficiency of translation by recycling ribosomes from one round of translation to another. In Ehrlichia ruminantium (strain Welgevonden), this protein is Ribosome-recycling factor.